Reading from the N-terminus, the 295-residue chain is Apolipoprotein E (295 aa).

The N-terminal stretch at 1–18 (MKVLWAALLVTFLAGCQA) is a signal peptide. 6 repeat units span residues 80 to 101 (TLMD…EQLS), 102 to 123 (PVAE…ARLG), 124 to 145 (ADME…AMLG), 146 to 167 (QSTE…KRLL), 193 to 211 (TVGS…AKLR), and 212 to 233 (ARME…EQVA). The tract at residues 80–233 (TLMDETMKEL…RLDEVKEQVA (154 aa)) is 6 X 22 AA approximate tandem repeats. Met143 bears the Methionine sulfoxide mark. Ser147 carries the phosphoserine modification. Residues 158 to 168 (HLRKLRKRLLR) are LDL and other lipoprotein receptors binding. Position 162-165 (162-165 (LRKR)) interacts with heparin. The tract at residues 191–268 (AATVGSLASQ…SWFEPLVEDM (78 aa)) is lipid-binding and lipoprotein association. The tract at residues 244–295 (QQISLQAEAFQARLKSWFEPLVEDMQRQWAGLVEKVQAAVGASTAPVPSDNH) is homooligomerization. The specificity for association with VLDL stretch occupies residues 256 to 268 (RLKSWFEPLVEDM).

Belongs to the apolipoprotein A1/A4/E family. As to quaternary structure, homotetramer. May interact with ABCA1; functionally associated with ABCA1 in the biogenesis of HDLs. May interact with APP/A4 amyloid-beta peptide; the interaction is extremely stable in vitro but its physiological significance is unclear. May interact with MAPT. May interact with MAP2. In the cerebrospinal fluid, interacts with secreted SORL1. Interacts with PMEL; this allows the loading of PMEL luminal fragment on ILVs to induce fibril nucleation. In terms of processing, APOE exists as multiple glycosylated and sialylated glycoforms within cells and in plasma. The extent of glycosylation and sialylation are tissue and context specific. Post-translationally, glycated in plasma VLDL. Phosphorylated by FAM20C in the extracellular medium.

The protein localises to the secreted. It is found in the extracellular space. Its subcellular location is the extracellular matrix. The protein resides in the extracellular vesicle. It localises to the endosome. The protein localises to the multivesicular body. Its function is as follows. APOE is an apolipoprotein, a protein associating with lipid particles, that mainly functions in lipoprotein-mediated lipid transport between organs via the plasma and interstitial fluids. APOE is a core component of plasma lipoproteins and is involved in their production, conversion and clearance. Apolipoproteins are amphipathic molecules that interact both with lipids of the lipoprotein particle core and the aqueous environment of the plasma. As such, APOE associates with chylomicrons, chylomicron remnants, very low density lipoproteins (VLDL) and intermediate density lipoproteins (IDL) but shows a preferential binding to high-density lipoproteins (HDL). It also binds a wide range of cellular receptors including the LDL receptor/LDLR, the LDL receptor-related proteins LRP1, LRP2 and LRP8 and the very low-density lipoprotein receptor/VLDLR that mediate the cellular uptake of the APOE-containing lipoprotein particles. Finally, APOE also has a heparin-binding activity and binds heparan-sulfate proteoglycans on the surface of cells, a property that supports the capture and the receptor-mediated uptake of APOE-containing lipoproteins by cells. A main function of APOE is to mediate lipoprotein clearance through the uptake of chylomicrons, VLDLs, and HDLs by hepatocytes. APOE is also involved in the biosynthesis by the liver of VLDLs as well as their uptake by peripheral tissues ensuring the delivery of triglycerides and energy storage in muscle, heart and adipose tissues. By participating in the lipoprotein-mediated distribution of lipids among tissues, APOE plays a critical role in plasma and tissues lipid homeostasis. APOE is also involved in two steps of reverse cholesterol transport, the HDLs-mediated transport of cholesterol from peripheral tissues to the liver, and thereby plays an important role in cholesterol homeostasis. First, it is functionally associated with ABCA1 in the biogenesis of HDLs in tissues. Second, it is enriched in circulating HDLs and mediates their uptake by hepatocytes. APOE also plays an important role in lipid transport in the central nervous system, regulating neuron survival and sprouting. This Macaca mulatta (Rhesus macaque) protein is Apolipoprotein E (APOE).